Here is a 449-residue protein sequence, read N- to C-terminus: Elongation factor 1-alpha 1 (449 aa).

Residues Lys-5–Ser-230 enclose the tr-type G domain. A G1 region spans residues Gly-14–Ser-21. Position 14–21 (Gly-14–Ser-21) interacts with GTP. The residue at position 55 (Lys-55) is an N6,N6-dimethyllysine. The tract at residues Gly-70–Asp-74 is G2. N6,N6,N6-trimethyllysine is present on Lys-79. The G3 stretch occupies residues Asp-91 to Gly-94. Residues Asp-91–His-95 and Asn-153–Asp-156 contribute to the GTP site. Residues Asn-153–Asp-156 are G4. Lys-187 is modified (N6,N6,N6-trimethyllysine). Residues Ser-194–Phe-196 form a G5 region. Position 261 is an N6-methyllysine (Lys-261). Residues Lys-306 and Lys-396 each carry the N6,N6,N6-trimethyllysine modification. Glycyl lysine isopeptide (Lys-Gly) (interchain with G-Cter in ubiquitin) cross-links involve residues Lys-438 and Lys-441.

It belongs to the TRAFAC class translation factor GTPase superfamily. Classic translation factor GTPase family. EF-Tu/EF-1A subfamily.

It localises to the cytoplasm. Its function is as follows. This protein promotes the GTP-dependent binding of aminoacyl-tRNA to the A-site of ribosomes during protein biosynthesis. The protein is Elongation factor 1-alpha 1 (A1) of Arabidopsis thaliana (Mouse-ear cress).